The primary structure comprises 347 residues: 3,4-dihydroxy-2-butanone 4-phosphate synthase (347 aa).

The tract at residues 1–200 is DHBP synthase; sequence MPLNRVREAI…ISDLIEYRMQ (200 aa). Residues 27-28, aspartate 32, 139-143, and glutamate 163 contribute to the D-ribulose 5-phosphate site; these read RE and RTGHT. Mg(2+) is bound at residue glutamate 28. Histidine 142 lines the Mg(2+) pocket. The tract at residues 201-347 is GTP cyclohydrolase II-like; the sequence is NEMLILIKER…IVLQGGPIQL (147 aa).

In the N-terminal section; belongs to the DHBP synthase family. This sequence in the C-terminal section; belongs to the GTP cyclohydrolase II family. It depends on Mg(2+) as a cofactor. Mn(2+) is required as a cofactor.

The catalysed reaction is D-ribulose 5-phosphate = (2S)-2-hydroxy-3-oxobutyl phosphate + formate + H(+). It participates in cofactor biosynthesis; riboflavin biosynthesis; 2-hydroxy-3-oxobutyl phosphate from D-ribulose 5-phosphate: step 1/1. Catalyzes the conversion of D-ribulose 5-phosphate to formate and 3,4-dihydroxy-2-butanone 4-phosphate. The polypeptide is 3,4-dihydroxy-2-butanone 4-phosphate synthase (ribB) (Wolinella succinogenes (strain ATCC 29543 / DSM 1740 / CCUG 13145 / JCM 31913 / LMG 7466 / NCTC 11488 / FDC 602W) (Vibrio succinogenes)).